Consider the following 397-residue polypeptide: Acetate kinase (397 aa).

Residue asparagine 7 coordinates Mg(2+). Lysine 14 is a binding site for ATP. Arginine 90 contributes to the substrate binding site. The Proton donor/acceptor role is filled by aspartate 147. ATP contacts are provided by residues 207 to 211, 282 to 284, and 330 to 334; these read HLGNG, DFR, and GLGEN. Glutamate 383 is a Mg(2+) binding site.

It belongs to the acetokinase family. In terms of assembly, homodimer. Mg(2+) is required as a cofactor. It depends on Mn(2+) as a cofactor.

The protein resides in the cytoplasm. It catalyses the reaction acetate + ATP = acetyl phosphate + ADP. Its pathway is metabolic intermediate biosynthesis; acetyl-CoA biosynthesis; acetyl-CoA from acetate: step 1/2. Functionally, catalyzes the formation of acetyl phosphate from acetate and ATP. Can also catalyze the reverse reaction. This chain is Acetate kinase, found in Clostridium botulinum (strain Loch Maree / Type A3).